A 356-amino-acid chain; its full sequence is Probable butyrate kinase (356 aa).

The protein belongs to the acetokinase family.

Its subcellular location is the cytoplasm. The catalysed reaction is butanoate + ATP = butanoyl phosphate + ADP. In Coprothermobacter proteolyticus (strain ATCC 35245 / DSM 5265 / OCM 4 / BT), this protein is Probable butyrate kinase.